Reading from the N-terminus, the 158-residue chain is Large ribosomal subunit protein eL20z (158 aa).

This sequence belongs to the eukaryotic ribosomal protein eL20 family.

The protein is Large ribosomal subunit protein eL20z (RPL18A1) of Arabidopsis thaliana (Mouse-ear cress).